Reading from the N-terminus, the 362-residue chain is Phospho-N-acetylmuramoyl-pentapeptide-transferase (362 aa).

Transmembrane regions (helical) follow at residues 28 to 48 (GAVL…IAWL), 75 to 95 (TMGG…WADL), 100 to 120 (VWIV…DDYL), 134 to 154 (AKLV…WSLQ), 170 to 190 (VLLQ…VGAG), 201 to 221 (GLAI…SYLV), 241 to 261 (LAVF…FNAP), 265 to 285 (VFMG…ISVV), 290 to 310 (LVLG…IVQV), and 339 to 359 (TVVI…LATL).

It belongs to the glycosyltransferase 4 family. MraY subfamily. It depends on Mg(2+) as a cofactor.

It is found in the cell inner membrane. The catalysed reaction is UDP-N-acetyl-alpha-D-muramoyl-L-alanyl-gamma-D-glutamyl-meso-2,6-diaminopimeloyl-D-alanyl-D-alanine + di-trans,octa-cis-undecaprenyl phosphate = di-trans,octa-cis-undecaprenyl diphospho-N-acetyl-alpha-D-muramoyl-L-alanyl-D-glutamyl-meso-2,6-diaminopimeloyl-D-alanyl-D-alanine + UMP. It functions in the pathway cell wall biogenesis; peptidoglycan biosynthesis. In terms of biological role, catalyzes the initial step of the lipid cycle reactions in the biosynthesis of the cell wall peptidoglycan: transfers peptidoglycan precursor phospho-MurNAc-pentapeptide from UDP-MurNAc-pentapeptide onto the lipid carrier undecaprenyl phosphate, yielding undecaprenyl-pyrophosphoryl-MurNAc-pentapeptide, known as lipid I. In Paramagnetospirillum magneticum (strain ATCC 700264 / AMB-1) (Magnetospirillum magneticum), this protein is Phospho-N-acetylmuramoyl-pentapeptide-transferase.